A 272-amino-acid chain; its full sequence is MRQIAIYGKGGIGKSTTTQNLTAALGESGKKIMIVGCDPKADSTRLILGGLTQKTVMDTLREEGEDIDLEDILKPGFSGIKCVESGGPEPGVGCAGRGIITSINMLESLGAYESDLDYVFYDVLGDVVCGGFAMPIREGKAQEIYIVASGELMALYAANNIAKGIQKYAKSGGTRLGGIICNSRQVDYEHELLEAFAKELGSQLIYFVPRDNIVQRAEINKKAVIEFEPECGQANEYRALAKSIDENKMFVIPKPMHTDRLEELMMEHGVLG.

An ATP-binding site is contributed by 8–15 (GKGGIGKS). Cysteine 94 contacts [4Fe-4S] cluster. Position 97 is an ADP-ribosylarginine; by dinitrogenase reductase ADP-ribosyltransferase (arginine 97). Position 129 (cysteine 129) interacts with [4Fe-4S] cluster.

It belongs to the NifH/BchL/ChlL family. As to quaternary structure, homodimer. The cofactor is [4Fe-4S] cluster. The reversible ADP-ribosylation of Arg-97 inactivates the nitrogenase reductase and regulates nitrogenase activity.

It carries out the reaction N2 + 8 reduced [2Fe-2S]-[ferredoxin] + 16 ATP + 16 H2O = H2 + 8 oxidized [2Fe-2S]-[ferredoxin] + 2 NH4(+) + 16 ADP + 16 phosphate + 6 H(+). In terms of biological role, the key enzymatic reactions in nitrogen fixation are catalyzed by the nitrogenase complex, which has 2 components: the iron protein and the molybdenum-iron protein. The polypeptide is Nitrogenase iron protein (Alkaliphilus metalliredigens (strain QYMF)).